A 213-amino-acid polypeptide reads, in one-letter code: Orotate phosphoribosyltransferase (213 aa).

Lys-26 provides a ligand contact to 5-phospho-alpha-D-ribose 1-diphosphate. 34–35 (FF) provides a ligand contact to orotate. 5-phospho-alpha-D-ribose 1-diphosphate is bound by residues 72–73 (YK), Arg-99, Lys-100, Lys-103, His-105, and 124–132 (DDVITAGTA). Residues Thr-128 and Arg-156 each coordinate orotate.

The protein belongs to the purine/pyrimidine phosphoribosyltransferase family. PyrE subfamily. As to quaternary structure, homodimer. Mg(2+) serves as cofactor.

It catalyses the reaction orotidine 5'-phosphate + diphosphate = orotate + 5-phospho-alpha-D-ribose 1-diphosphate. Its pathway is pyrimidine metabolism; UMP biosynthesis via de novo pathway; UMP from orotate: step 1/2. In terms of biological role, catalyzes the transfer of a ribosyl phosphate group from 5-phosphoribose 1-diphosphate to orotate, leading to the formation of orotidine monophosphate (OMP). The polypeptide is Orotate phosphoribosyltransferase (Shigella flexneri serotype 5b (strain 8401)).